The chain runs to 339 residues: Carboxyvinyl-carboxyphosphonate phosphorylmutase, chloroplastic (339 aa).

The N-terminal 30 residues, 1-30 (MSMLMAVKTTSLCCSSLNLTASPTFRRNPR), are a transit peptide targeting the chloroplast.

It belongs to the isocitrate lyase/PEP mutase superfamily.

The protein localises to the plastid. Its subcellular location is the chloroplast. The catalysed reaction is 1-carboxyvinyl carboxyphosphonate + H(+) = 3-(hydrohydroxyphosphoryl)pyruvate + CO2. This Arabidopsis thaliana (Mouse-ear cress) protein is Carboxyvinyl-carboxyphosphonate phosphorylmutase, chloroplastic.